Consider the following 78-residue polypeptide: Acyl carrier protein (78 aa).

The 76-residue stretch at 2–77 (SDTVERVKKI…DAVKFIDKAS (76 aa)) folds into the Carrier domain. Ser-37 is modified (O-(pantetheine 4'-phosphoryl)serine).

This sequence belongs to the acyl carrier protein (ACP) family. In terms of processing, 4'-phosphopantetheine is transferred from CoA to a specific serine of apo-ACP by AcpS. This modification is essential for activity because fatty acids are bound in thioester linkage to the sulfhydryl of the prosthetic group.

It localises to the cytoplasm. The protein operates within lipid metabolism; fatty acid biosynthesis. Carrier of the growing fatty acid chain in fatty acid biosynthesis. The sequence is that of Acyl carrier protein from Bartonella henselae (strain ATCC 49882 / DSM 28221 / CCUG 30454 / Houston 1) (Rochalimaea henselae).